The primary structure comprises 290 residues: Protoheme IX farnesyltransferase 1 (290 aa).

The next 8 helical transmembrane spans lie at 8–28 (ITKP…FFLA), 36–56 (FLLL…GCVV), 85–105 (AAFV…FQVV), 108–128 (LSAV…TMWY), 131–151 (NSVY…LVGY), 152–172 (LAVT…FCLW), 211–231 (AYVV…EAGY), and 269–289 (LLVV…LPFI).

This sequence belongs to the UbiA prenyltransferase family. Protoheme IX farnesyltransferase subfamily.

The protein resides in the cell inner membrane. The enzyme catalyses heme b + (2E,6E)-farnesyl diphosphate + H2O = Fe(II)-heme o + diphosphate. The protein operates within porphyrin-containing compound metabolism; heme O biosynthesis; heme O from protoheme: step 1/1. In terms of biological role, converts heme B (protoheme IX) to heme O by substitution of the vinyl group on carbon 2 of heme B porphyrin ring with a hydroxyethyl farnesyl side group. The chain is Protoheme IX farnesyltransferase 1 from Vibrio campbellii (strain ATCC BAA-1116).